Here is a 535-residue protein sequence, read N- to C-terminus: GMP synthase [glutamine-hydrolyzing] (535 aa).

The 194-residue stretch at 24–217 folds into the Glutamine amidotransferase type-1 domain; that stretch reads KILIVDFGSQ…VRKVAGLTGD (194 aa). Cys-101 serves as the catalytic Nucleophile. Residues His-191 and Glu-193 contribute to the active site. Residues 218-410 form the GMPS ATP-PPase domain; that stretch reads WTMRAFREEA…LGLPEIFVGR (193 aa). 245 to 251 provides a ligand contact to ATP; that stretch reads SGGVDSS.

As to quaternary structure, homodimer.

It catalyses the reaction XMP + L-glutamine + ATP + H2O = GMP + L-glutamate + AMP + diphosphate + 2 H(+). The protein operates within purine metabolism; GMP biosynthesis; GMP from XMP (L-Gln route): step 1/1. Catalyzes the synthesis of GMP from XMP. The polypeptide is GMP synthase [glutamine-hydrolyzing] (Nitrobacter winogradskyi (strain ATCC 25391 / DSM 10237 / CIP 104748 / NCIMB 11846 / Nb-255)).